Reading from the N-terminus, the 647-residue chain is Acetyl-coenzyme A synthetase (647 aa).

Residues 190–193, threonine 310, and asparagine 334 contribute to the CoA site; that span reads RGGK. ATP is bound by residues 386–388, 410–415, aspartate 499, and arginine 514; these read GEP and DTWWQT. Residue serine 522 coordinates CoA. Residue arginine 525 participates in ATP binding. The Mg(2+) site is built by valine 536, histidine 538, and valine 541. A CoA-binding site is contributed by arginine 583. Lysine 608 is modified (N6-acetyllysine).

The protein belongs to the ATP-dependent AMP-binding enzyme family. Mg(2+) is required as a cofactor. Post-translationally, acetylated. Deacetylation by the SIR2-homolog deacetylase activates the enzyme.

It carries out the reaction acetate + ATP + CoA = acetyl-CoA + AMP + diphosphate. In terms of biological role, catalyzes the conversion of acetate into acetyl-CoA (AcCoA), an essential intermediate at the junction of anabolic and catabolic pathways. AcsA undergoes a two-step reaction. In the first half reaction, AcsA combines acetate with ATP to form acetyl-adenylate (AcAMP) intermediate. In the second half reaction, it can then transfer the acetyl group from AcAMP to the sulfhydryl group of CoA, forming the product AcCoA. The protein is Acetyl-coenzyme A synthetase of Xanthomonas campestris pv. campestris (strain 8004).